The chain runs to 86 residues: Small ribosomal subunit protein bS20 (86 aa).

Over residues 1-11 (MANIKQQKKRN) the composition is skewed to basic residues. Residues 1–20 (MANIKQQKKRNKTNEKRRLQ) are disordered.

It belongs to the bacterial ribosomal protein bS20 family.

In terms of biological role, binds directly to 16S ribosomal RNA. The sequence is that of Small ribosomal subunit protein bS20 from Aster yellows witches'-broom phytoplasma (strain AYWB).